A 168-amino-acid chain; its full sequence is MRSWSPYALLVVAAIALDQWIKHLVETGLPFQEKLDLVPFLALFRTYNTGIAFSMFSSFGDTGLVVIAVLVVAFVLYLATRTPSGHVIARTGFALIIGGALGNLIDRAVYGHVIDYILFHTPVWSFAIFNLADAFISVGAALVVFDELIGWRREPSNAKPSKAKPSKD.

4 helical membrane-spanning segments follow: residues 5–25, 37–57, 59–79, and 85–105; these read SPYALLVVAAIALDQWIKHLV, LVPFLALFRTYNTGIAFSMFS, FGDTGLVVIAVLVVAFVLYLA, and GHVIARTGFALIIGGALGNLI. Active-site residues include Asp115 and Asp133. Residues 125-145 traverse the membrane as a helical segment; that stretch reads SFAIFNLADAFISVGAALVVF.

Belongs to the peptidase A8 family.

Its subcellular location is the cell inner membrane. It catalyses the reaction Release of signal peptides from bacterial membrane prolipoproteins. Hydrolyzes -Xaa-Yaa-Zaa-|-(S,diacylglyceryl)Cys-, in which Xaa is hydrophobic (preferably Leu), and Yaa (Ala or Ser) and Zaa (Gly or Ala) have small, neutral side chains.. It participates in protein modification; lipoprotein biosynthesis (signal peptide cleavage). Functionally, this protein specifically catalyzes the removal of signal peptides from prolipoproteins. This Mesorhizobium japonicum (strain LMG 29417 / CECT 9101 / MAFF 303099) (Mesorhizobium loti (strain MAFF 303099)) protein is Lipoprotein signal peptidase.